The following is a 309-amino-acid chain: Glutaminase (309 aa).

Substrate contacts are provided by serine 64, asparagine 114, glutamate 160, asparagine 167, tyrosine 191, tyrosine 243, and valine 261.

This sequence belongs to the glutaminase family. As to quaternary structure, homotetramer.

It carries out the reaction L-glutamine + H2O = L-glutamate + NH4(+). This Rhodopseudomonas palustris (strain BisB18) protein is Glutaminase.